Reading from the N-terminus, the 196-residue chain is Probable malonic semialdehyde reductase RutE (196 aa).

Belongs to the nitroreductase family. HadB/RutE subfamily. It depends on FMN as a cofactor.

The enzyme catalyses 3-hydroxypropanoate + NADP(+) = 3-oxopropanoate + NADPH + H(+). May reduce toxic product malonic semialdehyde to 3-hydroxypropionic acid, which is excreted. This is Probable malonic semialdehyde reductase RutE from Cronobacter sakazakii (strain ATCC BAA-894) (Enterobacter sakazakii).